Reading from the N-terminus, the 170-residue chain is Envelope protein 168 (170 aa).

Residue methionine 1 is a topological domain, intravirion. The chain crosses the membrane as a helical span at residues 2–22 (FYPVVQILIGIILVIILILGF). The Virion surface segment spans residues 23-170 (YHLKRKPPKK…TVMGIARNVL (148 aa)).

This sequence belongs to the asfivirus envelope protein p22 family.

It is found in the virion membrane. It localises to the host cell membrane. This chain is Envelope protein 168, found in African swine fever virus (isolate Tick/South Africa/Pretoriuskop Pr4/1996) (ASFV).